A 383-amino-acid chain; its full sequence is Homoserine O-acetyltransferase (383 aa).

The region spanning 52-362 (NAILVCHALT…PWGHDAFLLD (311 aa)) is the AB hydrolase-1 domain. The active-site Nucleophile is the Ser158. Arg227 is a binding site for substrate. Catalysis depends on residues Asp323 and His356. Residue Asp357 coordinates substrate.

It belongs to the AB hydrolase superfamily. MetX family. Homodimer.

Its subcellular location is the cytoplasm. The catalysed reaction is L-homoserine + acetyl-CoA = O-acetyl-L-homoserine + CoA. It participates in amino-acid biosynthesis; L-methionine biosynthesis via de novo pathway; O-acetyl-L-homoserine from L-homoserine: step 1/1. Transfers an acetyl group from acetyl-CoA to L-homoserine, forming acetyl-L-homoserine. The protein is Homoserine O-acetyltransferase of Symbiobacterium thermophilum (strain DSM 24528 / JCM 14929 / IAM 14863 / T).